We begin with the raw amino-acid sequence, 757 residues long: Nitrogen fixation protein FixI (757 aa).

At 1-121 (MSCCASSAAI…GEEEGDDLLK (121 aa)) the chain is on the cytoplasmic side. Residues 37–107 (RQTELSVPNA…AIAERGYQTH (71 aa)) enclose the HMA domain. Positions 48 and 51 each coordinate a metal cation. The helical transmembrane segment at 122–143 (QLILAVAVSGFAATNIMLLSVS) threads the bilayer. At 144-158 (VWSGADAATRDLFHW) the chain is on the extracellular side. Residues 159 to 178 (ISALIAGPALIYAGRFFYKS) traverse the membrane as a helical segment. Topologically, residues 179 to 185 (AWNAIRH) are cytoplasmic. Residues 186-206 (GRTNMDVPIALAVSLSYGMSL) traverse the membrane as a helical segment. The Extracellular portion of the chain corresponds to 207–218 (HETIGHGEHAWF). A helical membrane pass occupies residues 219 to 239 (DASVTLLFFLLIGRTLDHMMR). Residues 240 to 368 (GRARTAISGL…RARYRRIADR (129 aa)) are Cytoplasmic-facing. The chain crosses the membrane as a helical span at residues 369-391 (AARYYSPAVHLLALLTFVGWMLV). Residues 392-398 (EGDVRHA) lie on the Extracellular side of the membrane. The helical transmembrane segment at 399 to 416 (MLVAVAVLIITCPCALGL) threads the bilayer. The Cytoplasmic portion of the chain corresponds to 417–688 (AVPVVQVVAA…ETSRHAGQLI (272 aa)). Catalysis depends on Asp-454, which acts as the 4-aspartylphosphate intermediate. 2 residues coordinate Mg(2+): Asp-634 and Asp-638. A helical transmembrane segment spans residues 689–708 (RQNFALAIGYNVIAVPIAIL). Over 709–713 (GYATP) the chain is Extracellular. A helical membrane pass occupies residues 714 to 732 (LVAAVAMSSSSLVVVFNAL). At 733-757 (RLKRSLAAGRGATPGTLIHSGAVTS) the chain is on the cytoplasmic side.

This sequence belongs to the cation transport ATPase (P-type) (TC 3.A.3) family. Type IB subfamily.

The protein resides in the cell membrane. It catalyses the reaction ATP + H2O = ADP + phosphate + H(+). Functionally, fixI is a pump of a specific cation involved in symbiotic nitrogen fixation. The four proteins FixG, FixH, FixI, and FixS may participate in a membrane-bound complex coupling the FixI cation pump with a redox process catalyzed by FixG. This chain is Nitrogen fixation protein FixI (fixI), found in Rhizobium meliloti (strain 1021) (Ensifer meliloti).